The sequence spans 476 residues: Aspartyl/glutamyl-tRNA(Asn/Gln) amidotransferase subunit B (476 aa).

This sequence belongs to the GatB/GatE family. GatB subfamily. In terms of assembly, heterotrimer of A, B and C subunits.

It carries out the reaction L-glutamyl-tRNA(Gln) + L-glutamine + ATP + H2O = L-glutaminyl-tRNA(Gln) + L-glutamate + ADP + phosphate + H(+). The enzyme catalyses L-aspartyl-tRNA(Asn) + L-glutamine + ATP + H2O = L-asparaginyl-tRNA(Asn) + L-glutamate + ADP + phosphate + 2 H(+). In terms of biological role, allows the formation of correctly charged Asn-tRNA(Asn) or Gln-tRNA(Gln) through the transamidation of misacylated Asp-tRNA(Asn) or Glu-tRNA(Gln) in organisms which lack either or both of asparaginyl-tRNA or glutaminyl-tRNA synthetases. The reaction takes place in the presence of glutamine and ATP through an activated phospho-Asp-tRNA(Asn) or phospho-Glu-tRNA(Gln). This is Aspartyl/glutamyl-tRNA(Asn/Gln) amidotransferase subunit B from Bacillus cytotoxicus (strain DSM 22905 / CIP 110041 / 391-98 / NVH 391-98).